A 220-amino-acid polypeptide reads, in one-letter code: Guanylate kinase (220 aa).

A Guanylate kinase-like domain is found at 11 to 190 (GVLFVLSSPS…CYGEVMAILR (180 aa)). Residue 18 to 25 (SPSGAGKT) participates in ATP binding.

The protein belongs to the guanylate kinase family.

Its subcellular location is the cytoplasm. The enzyme catalyses GMP + ATP = GDP + ADP. Its function is as follows. Essential for recycling GMP and indirectly, cGMP. This is Guanylate kinase from Sphingopyxis alaskensis (strain DSM 13593 / LMG 18877 / RB2256) (Sphingomonas alaskensis).